The sequence spans 356 residues: tRNA-specific 2-thiouridylase MnmA 1 (356 aa).

ATP is bound by residues 8-15 and Met34; that span reads GMSGGVDS. Cys103 serves as the catalytic Nucleophile. Residues Cys103 and Cys199 are joined by a disulfide bond. Gly127 is a binding site for ATP. An interaction with tRNA region spans residues 149–151; the sequence is KDQ. The active-site Cysteine persulfide intermediate is Cys199. The tract at residues 305 to 306 is interaction with tRNA; that stretch reads RY.

It belongs to the MnmA/TRMU family.

It localises to the cytoplasm. It catalyses the reaction S-sulfanyl-L-cysteinyl-[protein] + uridine(34) in tRNA + AH2 + ATP = 2-thiouridine(34) in tRNA + L-cysteinyl-[protein] + A + AMP + diphosphate + H(+). Its function is as follows. Catalyzes the 2-thiolation of uridine at the wobble position (U34) of tRNA, leading to the formation of s(2)U34. The protein is tRNA-specific 2-thiouridylase MnmA 1 of Clostridium botulinum (strain ATCC 19397 / Type A).